Consider the following 1337-residue polypeptide: DNA mismatch repair protein Msh6 (1337 aa).

Residues 68 to 130 (PGDLVWAKME…IKYLRPYKGS (63 aa)) enclose the PWWP domain. Residues 170-310 (AVCSEPSDTE…SEAPKRAAPV (141 aa)) are disordered. A compositionally biased stretch (acidic residues) spans 176 to 187 (SDTEEAEEEEME). Positions 226-248 (VLDSDSDRDGSDVEFKPDVKEAS) are enriched in basic and acidic residues. The segment covering 257–272 (DENEATDVETDEESIE) has biased composition (acidic residues). Residues 279 to 292 (PSKRKRGNVSKPSK) are compositionally biased toward basic residues. Residues 294–305 (SSLENEHSEAPK) are compositionally biased toward basic and acidic residues. 1111-1118 (GPNMGGKS) contributes to the ATP binding site.

The protein belongs to the DNA mismatch repair MutS family.

It is found in the nucleus. Its function is as follows. Component of the post-replicative DNA mismatch repair system (MMR). Involved in B cell growth by positively regulating B cell proliferation and controlling replication efficiency. Controls cell cycle to prevent re-replication and defects in DNA damage-induced G2 checkpoint. Doesn't seem to counteract or control the immunoglobulin gene conversion (Ig GC) and to contribute to guanine/uracil mismatch repair. The polypeptide is DNA mismatch repair protein Msh6 (Gallus gallus (Chicken)).